Reading from the N-terminus, the 652-residue chain is Inactive leucine-rich repeat receptor-like serine/threonine-protein kinase At1g60630 (652 aa).

The N-terminal stretch at 1 to 23 (MISSSSCMFFLVFAFFLISPVRS) is a signal peptide. Residues 24–256 (SDVEALLSLK…SRTKLIGIIS (233 aa)) lie on the Extracellular side of the membrane. LRR repeat units follow at residues 64–84 (SKLV…SLNQ), 85–108 (LDQL…LSGL), 109–132 (VNLK…LTSL), 134–156 (RLKT…LLRL), 158–178 (RLYT…PLNQ), and 179–203 (ATLR…ALNR). 3 N-linked (GlcNAc...) asparagine glycosylation sites follow: N72, N104, and N120. 3 N-linked (GlcNAc...) asparagine glycosylation sites follow: N185, N205, and N225. Residues 257–277 (GSICGGILILLLTFLLICLLW) traverse the membrane as a helical segment. Residues 278 to 652 (RRKRSKSKRE…SLPREDHMSI (375 aa)) lie on the Cytoplasmic side of the membrane. The interval 286–321 (REERRSKRVAESKEAKTAETEEGTSDQKNKRFSWEK) is disordered. Residues 350 to 624 (KASAETLGRG…VKDARAEAAL (275 aa)) form the Protein kinase domain. Position 352 is a phosphoserine (S352). ATP contacts are provided by residues 356-364 (LGRGTLGST) and K378. S430 and S433 each carry phosphoserine. T509 carries the phosphothreonine modification. Residues 630 to 652 (SDHSPGRWSDTIQSLPREDHMSI) are disordered.

The protein belongs to the protein kinase superfamily. Ser/Thr protein kinase family.

It is found in the cell membrane. The protein is Inactive leucine-rich repeat receptor-like serine/threonine-protein kinase At1g60630 of Arabidopsis thaliana (Mouse-ear cress).